We begin with the raw amino-acid sequence, 310 residues long: M1-specific T cell receptor beta chain (310 aa).

An N-terminal signal peptide occupies residues 1-21 (MSNQVLCCVVLCLLGANTVDG). The t cell receptor beta variable 19 stretch occupies residues 22–114 (GITQSPKYLF…TAFYLCASSI (93 aa)). Residues 34 to 131 (EGQNVTLSCE…FGPGTRLTVT (98 aa)) form the Ig-like V-type domain. N-linked (GlcNAc...) asparagine glycosylation is present at Asn-37. An intrachain disulfide couples Cys-42 to Cys-110. Positions 46 to 50 (LNHDA) are CDR1. Asp-49 contributes to the a peptide antigen binding site. A CDR2 region spans residues 68 to 73 (SQIVND). Residues 110 to 122 (CASSIRSSYEQYF) form a CDR3 region. The t cell receptor beta joining 2-7 stretch occupies residues 117–131 (SYEQYFGPGTRLTVT). The segment at 133-310 (DLKNVFPPKV…AMVKRKDSRG (178 aa)) is t cell receptor beta constant 2. The Ig-like C1-type domain occupies 140–249 (PKVAVFEPSE…WTQDRAKPVT (110 aa)). Cysteines 162 and 227 form a disulfide. The N-linked (GlcNAc...) asparagine glycan is linked to Asn-201. The connecting peptide stretch occupies residues 262-276 (CGFTSESYQQGVLSA). The chain crosses the membrane as a helical span at residues 277–299 (TILYEILLGKATLYAVLVSALVL). Topologically, residues 300-310 (MAMVKRKDSRG) are cytoplasmic.

In terms of assembly, disulfide-linked heterodimer with TRAV27*01J42*01C*01 alpha chain. The TR primarily interacts via its CDR3-beta domain with M/matrix protein 1-derived peptide (GILGFVFTL) displayed by HLA-A*02.01 in a 'peg-notch' recognition mode. The alpha-beta TR associates with the transmembrane signaling CD3 coreceptor proteins to form the TR-CD3 (TCR). The assembly of alpha-beta TR heterodimers with CD3 occurs in the endoplasmic reticulum where a single alpha-beta TR heterodimer associates with one CD3D-CD3E heterodimer, one CD3G-CD3E heterodimer and one CD247 homodimer forming a stable octameric structure. CD3D-CD3E and CD3G-CD3E heterodimers preferentially associate with TR alpha and TR beta chains (via TM domain), respectively. The association of the CD247 homodimer is the last step of TCR assembly in the endoplasmic reticulum and is required for transport to the cell surface. Expressed in M/matrix protein 1-specific effector memory CD8-positive T cells readily detectable in the peripheral blood, secondary lymphoid organs and lung (primary site of infection) of IAV infected individuals.

The protein resides in the cell membrane. Its function is as follows. The beta chain of TRAV27*01J42*01C*01/TRBV19*01J2S7*01C*02 alpha-beta T cell receptor (TR) clonotype that is specific for HLA-A*02:01-restricted M/matrix protein 1 immunodominant epitope GILGFVFTL of influenza A virus (IAV). Classified as a public TCR clonotype, it is preferentially selected in effector memory CD8-positive T cells among multiple HLA-A*02:01 carriers/individuals and confers long-lived immunity against IAV infection. Can cross-recognize sporadically emerging IAV variants by molecular mimicry, inducing immunity toward different influenza strains. Antigen recognition initiates TR-CD3 clustering on the cell surface and intracellular activation of LCK that phosphorylates the ITAM motifs of CD3G, CD3D, CD3E and CD247 enabling the recruitment of ZAP70. In turn, ZAP70 phosphorylates LAT, which recruits numerous signaling molecules to form the LAT signalosome. The LAT signalosome propagates signal branching to three major signaling pathways, the calcium, the mitogen-activated protein kinase (MAPK) kinase and the nuclear factor NF-kappa-B (NF-kB) pathways, leading to the mobilization of transcription factors that are critical for gene expression and essential for T cell differentiation into effector/memory T cells. The sequence is that of M1-specific T cell receptor beta chain from Homo sapiens (Human).